The sequence spans 899 residues: ATP-dependent DNA helicase DDX31 (899 aa).

2 stretches are compositionally biased toward basic residues: residues 1–12 (MNKHDQKKKRNK) and 21–31 (KKSKGFIKNKK). A disordered region spans residues 1 to 142 (MNKHDQKKKR…SKHKRNVPSK (142 aa)). Over residues 76–85 (NMNDDDDNNM) the composition is skewed to acidic residues. Over residues 86–102 (NDDYNNNNIKGDYNNNN) the composition is skewed to low complexity. Acidic residues predominate over residues 106–121 (DDVDDDDYDDDDDDNF). Positions 173-201 (FCDLKYILSESLINTLEKNEFIKMTSIQK) match the Q motif motif. The Helicase ATP-binding domain occupies 204 to 433 (IPLFFKPNDI…NYCLTNNTMW (230 aa)). 217-224 (SMTGSGKT) provides a ligand contact to ATP. The DEAD box signature appears at 332–335 (DEAD). The segment covering 463–472 (NRENSPLNIH) has biased composition (polar residues). The interval 463-517 (NRENSPLNIHNNDDNDDNDDNDENNGDNNNNNDDNNNNNDDNNNKNNDDDNNNTY) is disordered. The segment covering 476–487 (DNDDNDDNDENN) has biased composition (acidic residues). A compositionally biased stretch (low complexity) spans 488–503 (GDNNNNNDDNNNNNDD). A Helicase C-terminal domain is found at 593–782 (KITPVLERED…TIINHFKKFC (190 aa)).

It belongs to the DEAD box helicase family. DDX31/DBP7 subfamily.

It localises to the nucleus. The protein localises to the nucleolus. It catalyses the reaction ATP + H2O = ADP + phosphate + H(+). In terms of biological role, has DNA helicase activity and may also have RNA helicase activity; the DNA helicase direction was not determined. Shows ssDNA and RNA dependent ATPase activity. In Plasmodium falciparum (isolate 3D7), this protein is ATP-dependent DNA helicase DDX31 (DDX31).